The chain runs to 212 residues: Peptide methionine sulfoxide reductase MsrA (212 aa).

The active site involves cysteine 52.

It belongs to the MsrA Met sulfoxide reductase family.

It catalyses the reaction L-methionyl-[protein] + [thioredoxin]-disulfide + H2O = L-methionyl-(S)-S-oxide-[protein] + [thioredoxin]-dithiol. The enzyme catalyses [thioredoxin]-disulfide + L-methionine + H2O = L-methionine (S)-S-oxide + [thioredoxin]-dithiol. In terms of biological role, has an important function as a repair enzyme for proteins that have been inactivated by oxidation. Catalyzes the reversible oxidation-reduction of methionine sulfoxide in proteins to methionine. The protein is Peptide methionine sulfoxide reductase MsrA of Escherichia coli (strain ATCC 8739 / DSM 1576 / NBRC 3972 / NCIMB 8545 / WDCM 00012 / Crooks).